Consider the following 232-residue polypeptide: Small ribosomal subunit protein uS2 (232 aa).

The protein belongs to the universal ribosomal protein uS2 family.

The polypeptide is Small ribosomal subunit protein uS2 (Carboxydothermus hydrogenoformans (strain ATCC BAA-161 / DSM 6008 / Z-2901)).